Here is a 908-residue protein sequence, read N- to C-terminus: DNA mismatch repair protein MutS (908 aa).

ATP is bound at residue Gly-659–Ser-666.

Belongs to the DNA mismatch repair MutS family.

Its function is as follows. This protein is involved in the repair of mismatches in DNA. It is possible that it carries out the mismatch recognition step. This protein has a weak ATPase activity. The protein is DNA mismatch repair protein MutS of Parvibaculum lavamentivorans (strain DS-1 / DSM 13023 / NCIMB 13966).